We begin with the raw amino-acid sequence, 430 residues long: Dihydroorotase (430 aa).

Residues H57 and H59 each contribute to the Zn(2+) site. Residues H59 to R61 and N91 contribute to the substrate site. 3 residues coordinate Zn(2+): D151, H178, and H231. Residue N277 participates in substrate binding. D304 contacts Zn(2+). D304 is a catalytic residue. Substrate-binding positions include H308 and P322 to G323.

This sequence belongs to the metallo-dependent hydrolases superfamily. DHOase family. Class I DHOase subfamily. The cofactor is Zn(2+).

It catalyses the reaction (S)-dihydroorotate + H2O = N-carbamoyl-L-aspartate + H(+). Its pathway is pyrimidine metabolism; UMP biosynthesis via de novo pathway; (S)-dihydroorotate from bicarbonate: step 3/3. Functionally, catalyzes the reversible cyclization of carbamoyl aspartate to dihydroorotate. The sequence is that of Dihydroorotase from Mycobacterium leprae (strain TN).